The sequence spans 515 residues: Nectin-1 (515 aa).

Positions 1–30 are cleaved as a signal peptide; sequence MARMGLAGAAGRWWGLALGLTAFFLPGAHT. The Ig-like V-type domain occupies 31 to 141; it reads QVVQVNDSMY…GNRESQLNLT (111 aa). The Extracellular segment spans residues 31-355; sequence QVVQVNDSMY…GRRAGQVPTA (325 aa). N-linked (GlcNAc...) asparagine glycans are attached at residues asparagine 36, asparagine 72, asparagine 139, asparagine 202, asparagine 286, asparagine 297, asparagine 307, and asparagine 332. Cysteine 51 and cysteine 124 form a disulfide bridge. 2 consecutive Ig-like C2-type domains span residues 145–243 and 247–334; these read KPTN…TLNV and PEVT…VNIT. Disulfide bonds link cysteine 172-cysteine 226 and cysteine 269-cysteine 316. Residues 282–299 are interaction with FGFR; the sequence is WTTLNGSLPKGVEAQNRT. The helical transmembrane segment at 356–376 threads the bilayer; it reads IIGGVVGSILLVLFVVGGIVV. Residues 377-515 lie on the Cytoplasmic side of the membrane; the sequence is ALCRRRHTFK…SFISKKEWYV (139 aa). Positions 400 to 486 are disordered; it reads YSKAGIPQHH…DGYGDRTLGY (87 aa). A phosphoserine mark is found at serine 422, serine 434, and serine 435. At tyrosine 436 the chain carries Phosphotyrosine. A compositionally biased stretch (acidic residues) spans 436–445; that stretch reads YEEEEEEEGG. Basic and acidic residues predominate over residues 446–464; the sequence is GGERKVGGPHPKYDEDAKR. Serine 509 carries the phosphoserine modification.

This sequence belongs to the nectin family. As to quaternary structure, (Microbial infection) Interacts with herpes pseudorabies virus/PRV envelope glycoprotein D.

It is found in the cell membrane. It localises to the cell junction. The protein resides in the adherens junction. Its subcellular location is the presynaptic cell membrane. Functionally, (Microbial infection) Acts as a receptor for herpes simplex virus 1/HHV-1, herpes simplex virus 2/HHV-2, and pseudorabies virus/PRV. This Sus scrofa (Pig) protein is Nectin-1.